The chain runs to 533 residues: Methyl-accepting chemotaxis protein IV (533 aa).

Over 1-6 (MFNRIR) the chain is Cytoplasmic. Residues 7-33 (ISTTLFLILILCGILQIGSNGMSFWAF) traverse the membrane as a helical segment. Over 34-188 (RDDLQRLNQV…AQSQRNYQIS (155 aa)) the chain is Periplasmic. Residues 189 to 209 (ALVFISMIIVAAIYISSALWW) form a helical membrane-spanning segment. At 210-533 (TRKMIVQPLA…VQLQIAPVVS (324 aa)) the chain is on the cytoplasmic side. In terms of domain architecture, HAMP spans 212 to 264 (KMIVQPLAIIGSHFDSIAAGNLARPIAVYGRNEITAIFASLKTMQQALRGTVS). The Methyl-accepting transducer domain occupies 269–498 (GSQEMHIGIA…EAAVATEQLA (230 aa)). 3 positions are modified to glutamate methyl ester (Gln): Gln293, Gln300, and Gln307. At Glu489 the chain carries Glutamate methyl ester (Glu).

Belongs to the methyl-accepting chemotaxis (MCP) protein family.

It is found in the cell inner membrane. Mediates taxis toward dipeptides via an interaction with the periplasmic dipeptide-binding protein. Functionally, chemotactic-signal transducers respond to changes in the concentration of attractants and repellents in the environment, transduce a signal from the outside to the inside of the cell, and facilitate sensory adaptation through the variation of the level of methylation. Attractants increase the level of methylation while repellents decrease the level of methylation, the methyl groups are added by the methyltransferase CheR and removed by the methylesterase CheB. The sequence is that of Methyl-accepting chemotaxis protein IV (tap) from Escherichia coli (strain K12).